Consider the following 338-residue polypeptide: tRNA N6-adenosine threonylcarbamoyltransferase (338 aa).

Positions 111 and 115 each coordinate Fe cation. Substrate-binding positions include 134–138 (LVSGG), D167, G180, and N272. D300 contacts Fe cation.

It belongs to the KAE1 / TsaD family. Fe(2+) serves as cofactor.

It is found in the cytoplasm. It carries out the reaction L-threonylcarbamoyladenylate + adenosine(37) in tRNA = N(6)-L-threonylcarbamoyladenosine(37) in tRNA + AMP + H(+). Functionally, required for the formation of a threonylcarbamoyl group on adenosine at position 37 (t(6)A37) in tRNAs that read codons beginning with adenine. Is involved in the transfer of the threonylcarbamoyl moiety of threonylcarbamoyl-AMP (TC-AMP) to the N6 group of A37, together with TsaE and TsaB. TsaD likely plays a direct catalytic role in this reaction. This Shewanella putrefaciens (strain CN-32 / ATCC BAA-453) protein is tRNA N6-adenosine threonylcarbamoyltransferase.